The primary structure comprises 85 residues: MKVSVLITLAVLGVMFVWASAAELEERGSDQRDSPAWLKSMERIFQSEERECRKMFGGCSVDSDCCAHLGCKPTLKYCAWDLTFP.

The first 21 residues, 1-21 (MKVSVLITLAVLGVMFVWASA), serve as a signal peptide directing secretion. Residues 22 to 51 (AELEERGSDQRDSPAWLKSMERIFQSEERE) constitute a propeptide that is removed on maturation. Cystine bridges form between cysteine 52/cysteine 66, cysteine 59/cysteine 71, and cysteine 65/cysteine 78.

Belongs to the neurotoxin 10 (Hwtx-1) family. 28 (Jztx-11) subfamily. Expressed by the venom gland.

The protein localises to the secreted. Its function is as follows. Probable ion channel inhibitor. The sequence is that of Kappa-theraphotoxin-Cg1d from Chilobrachys guangxiensis (Chinese earth tiger tarantula).